The following is a 2774-amino-acid chain: Teneurin-2 (2774 aa).

Positions 1–375 constitute a Teneurin N-terminal domain; that stretch reads MDVKDRRHRS…KPSKYCSWKC (375 aa). At 1–379 the chain is on the cytoplasmic side; the sequence is MDVKDRRHRS…YCSWKCAALS (379 aa). Phosphoserine is present on residues S90 and S124. The segment at 111 to 271 is disordered; sequence TGSDADSDTE…HHHSSANSLN (161 aa). Residues 141-155 are compositionally biased toward polar residues; the sequence is SSGLSSRENSALTLT. T155 carries the post-translational modification Phosphothreonine. S157 carries the phosphoserine modification. Positions 159–168 are enriched in basic and acidic residues; sequence NENKSDDENG. Low complexity predominate over residues 176–188; it reads SPSLLPSAQLPSS. Residues 202 to 211 show a composition bias toward polar residues; it reads DSNTSHQIMD. The segment covering 229–240 has biased composition (low complexity); that stretch reads SGPQQASSSGPP. A helical membrane pass occupies residues 380-400; it reads AIAAALLLAILLAYFIAMHLL. The Extracellular portion of the chain corresponds to 401-2774; that stretch reads GLNWQLQPAD…FLRQNEMGKR (2374 aa). Residues N443 and N482 are each glycosylated (N-linked (GlcNAc...) asparagine). EGF-like domains follow at residues 575–603, 598–634, 636–668, 669–701, 702–735, 738–766, 769–797, and 808–841; these read DCPRNCHGNGECVSGVCHCFPGFLGADCA, LGADCAKAACPVLCSGNGQYSKGTCQCYSGWKGAECD, PMNQCIDPSCGGHGSCIDGNCVCSAGYKGEHCE, EVDCLDPTCSSHGVCVNGECLCSPGWGGLNCEL, ARVQCPDQCSGHGTYLPDTGLCSCDPNWMGPDCS, VCSVDCGTHGVCIGGACRCEEGWTGAACD, VCHPRCIEHGTCKDGKCECREGWNGEHCT, and DGCPDLCNGNGRCTLGQNSWQCVCQTGWRGPGCN. 22 disulfides stabilise this stretch: C576-C586, C580-C591, C593-C602, C611-C622, C624-C633, C640-C651, C645-C656, C658-C667, C672-C683, C677-C688, C690-C699, C710-C723, C725-C734, C739-C749, C743-C754, C756-C765, C770-C780, C774-C785, C787-C796, C810-C820, C814-C829, and C831-C840. N925, N948, and N1267 each carry an N-linked (GlcNAc...) asparagine glycan. NHL repeat units follow at residues 1272 to 1316, 1342 to 1386, 1401 to 1452, 1474 to 1501, and 1530 to 1573; these read LELR…VKSL, ARCG…NGII, LSCD…IAGR, LESASAIAISHTGVLYITETDEKKINRL, and CYSG…VSKN. One copy of the YD 1 repeat lies at 1583–1602; it reads YEAASPGEQELYVFNADGIH. N1616 carries an N-linked (GlcNAc...) asparagine glycan. 3 YD repeats span residues 1619–1639, 1682–1701, and 1702–1724; these read YSTDNDVTELIDNNGNSLKIR, YDGNTGLLATKSDETGWTTF, and YDYDHEGRLTNVTRPTGVVTSLH. 5 N-linked (GlcNAc...) asparagine glycosylation sites follow: N1712, N1749, N1773, N1807, and N1892. YD repeat units lie at residues 1895 to 1914, 1936 to 1954, 1955 to 1975, 1982 to 1999, 2000 to 2021, 2022 to 2039, 2042 to 2062, 2065 to 2085, 2093 to 2113, 2119 to 2136, 2137 to 2163, 2165 to 2178, 2179 to 2202, 2205 to 2225, 2226 to 2246, 2248 to 2268, 2280 to 2300, and 2302 to 2322; these read YFFNGRLAGLQRGAMSERTD, YLDKSMVLLLQSQRQYIFE, YDSSDRLLAVTMPSVARHSMS, YIRNIYNPPESNASVIFD, YSDDGRILKTSFLGTGRQVFYK, YGKLSKLSEIVYDSTAVT, YDETTGVLKMVNLQSGGFSCT, YRKIGPLVDKQIYRFSEEGMV, YHDNSFRIASIKPVISETPLP, YDEISGKVEHFGKFGVIY, YDINQIITTAVMTLSKHFDTHGRIKEV, YEMFRSLMYWMTVQ, YDSMGRVIKRELKLGPYANTTKYT, YDGDGQLQSVAVNDRPTWRYS, YDLNGNLHLLNPGNSVRLMPL, YDLRDRITRLGDVQYKIDDDG, YNSKGLLTRAYNKASGWSVQY, and YDGVGRRASYKTNLGHHLQYF. N-linked (GlcNAc...) asparagine glycosylation is present at N1993. N-linked (GlcNAc...) asparagine glycosylation occurs at N2197. The N-linked (GlcNAc...) asparagine glycan is linked to N2337. One copy of the YD 23 repeat lies at 2348-2389; sequence YDLQGHLFAMESSSGEEYYVASDNTGTPLAVFSINGLMIKQL. A glycan (N-linked (GlcNAc...) asparagine) is linked at N2648.

Belongs to the tenascin family. Teneurin subfamily. In terms of assembly, homodimer; disulfide-linked. Heterodimer with either TENM1 or TENM3. May also form heterodimer with TENM4. Isoform 2 (C-terminal globular domain) interacts with ADGRL1 isoform 2. Derives from the membrane form by proteolytic processing. In terms of processing, derives from the plasma membrane form by proteolytic cleavage and translocates to the nucleus. Homophilic binding of the C-terminal extracellular domain stimulates its proteolytic cleavage and release in the cytoplasmic. Is subjected to rapid degradation by the proteasome pathway. Highly expressed in heart, followed by brain, liver, kidney and fetal brain and weakly expressed in lung and testis. No expression was detected in skeletal muscle, pancreas, spleen, ovary and fetal liver.

The protein localises to the cell membrane. The protein resides in the presynaptic cell membrane. Its subcellular location is the postsynaptic cell membrane. It localises to the endoplasmic reticulum. It is found in the golgi apparatus. The protein localises to the synapse. The protein resides in the cell projection. Its subcellular location is the dendritic spine. It localises to the filopodium. It is found in the growth cone. The protein localises to the nucleus. The protein resides in the PML body. Its function is as follows. Involved in neural development, regulating the establishment of proper connectivity within the nervous system. Acts as a ligand of the ADGRL1 and ADGRL3 receptors that are expressed at the surface of adjacent cells. Promotes the formation of filopodia and enlarged growth cone in neuronal cells. Mediates axon guidance and homophilic and heterophilic cell-cell adhesion. May function as a cellular signal transducer. Functionally, acts as a ligand of the ADGRL1 receptor. Mediates axon guidance and heterophilic cell-cell adhesion. In terms of biological role, induces gene transcription inhibition. The polypeptide is Teneurin-2 (TENM2) (Homo sapiens (Human)).